Consider the following 716-residue polypeptide: ATP-dependent DNA helicase DinG (716 aa).

The tract at residues 1–114 (MALTAALKAQ…PDLKFTAAFG (114 aa)) is HD1 domain N-terminus. The Helicase ATP-binding domain occupies 17–294 (ALQEQIPDFI…TCMEQFRPKT (278 aa)). The ATP site is built by Ile-26, Gln-31, Lys-60, and Thr-61. The interval 115 to 216 (RGRYVCPRNL…FFVARREIQE (102 aa)) is [4Fe-4S] domain. Cys-120, Cys-194, Cys-199, and Cys-205 together coordinate [4Fe-4S] cluster. The interval 217-261 (AEVVVANHALVMAAMESEAVLPDPKNLLLVLDEGHHLPDVARDAL) is HD1 domain middle. A DEAH box motif is present at residues 248-251 (DEGH). The segment at 262 to 438 (EMSAEITAPW…LHLWFHCVGI (177 aa)) is arch domain. The interval 439 to 491 (RVSDQLERLLWRSIPHIIVTSATLRSLNSFSRLQEMSGLKEKAGDRFVALDSP) is HD1 domain middle. The interval 492 to 716 (FNHCEQGKIV…KTKSPRRRRR (225 aa)) is HD2 domain. The ATP site is built by Asp-599, Arg-656, and Arg-659.

This sequence belongs to the helicase family. DinG subfamily. Type 1 sub-subfamily. Monomer in solution. Requires [4Fe-4S] cluster as cofactor. The cofactor is Mg(2+).

It catalyses the reaction Couples ATP hydrolysis with the unwinding of duplex DNA at the replication fork by translocating in the 5'-3' direction. This creates two antiparallel DNA single strands (ssDNA). The leading ssDNA polymer is the template for DNA polymerase III holoenzyme which synthesizes a continuous strand.. It carries out the reaction ATP + H2O = ADP + phosphate + H(+). ATPase activity is 15-fold stimulated by single-stranded DNA (ssDNA). Reduction of the [4Fe-4S] cluster reversibly switches off helicase activity. Remains fully active after exposure to 100-fold excess of hydrogen peroxide, but the [4Fe-4S] cluster can be efficiently modified by nitric oxide (NO), forming the DinG-bound dinitrosyl iron complex with the concomitant inactivation of helicase activity. Helicase activity on G-quadruplex DNA is inhibited by porphyrin derivatives meso-tetra (N-methyl-4-pyridyl) porphine tetra tosylate (T4) and N-methyl mesoporphyrin IX (NMM). Helicase activity on forked duplexes is not inhibited by T4 or NMM. G-quadruplex ligands such as Pyridostatin, PhenDC3, BRACO-19 and Netropsin can alter recognition and unwinding of G-quadruplex DNAs; the effect is both ligand- and G-quadruplex DNA-specific. Functionally, DNA-dependent ATPase and 5'-3' DNA helicase. Can also unwind DNA:RNA hybrid duplexes. Is active on D-loops, R-loops, and on forked structures. Unwinds G-quadruplex DNA in a 5'-3' direction; unwinding efficiency differs on different substrates. Does not appear to unwind replication forks or Holliday junctions. Translocates on single-stranded (ss)DNA with a 5'-3' polarity. In vitro at high concentrations also unwinds in a 3'-5' direction. May be involved in recombinational DNA repair and the resumption of replication after DNA damage. The [4Fe-4S] cluster is redox active at cellular potentials and is involved in DNA-mediated charge-transport signaling between DNA repair proteins from distinct pathways. DinG cooperates at long-range with endonuclease III, a base excision repair enzyme, using DNA charge transport to redistribute to regions of DNA damage. Binds 10-11 nucleotides of ssDNA in a positively-charged groove across the helicase domains. The protein is ATP-dependent DNA helicase DinG of Escherichia coli (strain K12).